We begin with the raw amino-acid sequence, 450 residues long: ATP-dependent protease ATPase subunit HslU (450 aa).

Residues V29, G71–E76, D261, E328, and R400 each bind ATP.

It belongs to the ClpX chaperone family. HslU subfamily. As to quaternary structure, a double ring-shaped homohexamer of HslV is capped on each side by a ring-shaped HslU homohexamer. The assembly of the HslU/HslV complex is dependent on binding of ATP.

Its subcellular location is the cytoplasm. Functionally, ATPase subunit of a proteasome-like degradation complex; this subunit has chaperone activity. The binding of ATP and its subsequent hydrolysis by HslU are essential for unfolding of protein substrates subsequently hydrolyzed by HslV. HslU recognizes the N-terminal part of its protein substrates and unfolds these before they are guided to HslV for hydrolysis. In Rickettsia prowazekii (strain Madrid E), this protein is ATP-dependent protease ATPase subunit HslU.